Reading from the N-terminus, the 646-residue chain is MGKIIGIDLGTTNSCVSVMEGGEPVVIPNSEGGRTTPSIVGFTSKDERVVGQPAKNQMITNPERTVYSVKRFIGHRYSELTDELKRVPYKIVPQGEDVRIDIDGKLYSTQEISAFILQKMKKTAEDYLGETVTEAVITVPAYFNDAQRQATKDAGKIAGLEVKRIINEPTAASLAFGFNKDSKKEKTIAVYDLGGGTFDISILELGDGVFEVKSTNGDTHLGGDDFDNRIVNWLVDEFKKDTGIDLSKDRMALQRLREAAEKAKIELSSVANTEVNLPFITADANGPKHLQKSLSRAKFEQMTEDLFERTKEPCRKALKDAGITPDKIDDILLVGGSTRMPKVLQIIKEIFGKEGSKSVNPDEAVAMGAAIQGGILGGDVKDVLLLDVTPLSLGIETMGGVFTPLINRNTTIPTRKSQVFSTAADGQTAVSIHVLQGERGMASQNRTLGNFDLVGIPPAPRGVPQIEVTFDIDANGIVHVSAKDLGTGKEQHIRIESSSGLSESEIDRMVKEAEANAENDKLEKEKVEAKNNADSLIYQTEKTLKEMGDKIGAADKQKIEAAIADLRQALNSDNTADIKAKTENLQQAAYKIAEEMYKQQGAQAGADPNAGSSQGAQAGTDYGTSGPKTGTADDVDYEVVNDDNDK.

T197 is subject to Phosphothreonine; by autocatalysis. Positions 599–646 (QQGAQAGADPNAGSSQGAQAGTDYGTSGPKTGTADDVDYEVVNDDNDK) are disordered. Positions 610–628 (AGSSQGAQAGTDYGTSGPK) are enriched in polar residues. The span at 633–646 (DDVDYEVVNDDNDK) shows a compositional bias: acidic residues.

The protein belongs to the heat shock protein 70 family.

Acts as a chaperone. This is Chaperone protein DnaK from Treponema denticola (strain ATCC 35405 / DSM 14222 / CIP 103919 / JCM 8153 / KCTC 15104).